The sequence spans 519 residues: Putative cysteine ligase BshC (519 aa).

Coiled-coil stretches lie at residues 51–71 and 440–464; these read LNALVDELMRQNPRLNDSLKE and TKLNKQLQLAVETIVDQKRRLHEQA.

Belongs to the BshC family.

Its function is as follows. Involved in bacillithiol (BSH) biosynthesis. May catalyze the last step of the pathway, the addition of cysteine to glucosamine malate (GlcN-Mal) to generate BSH. The chain is Putative cysteine ligase BshC from Exiguobacterium sibiricum (strain DSM 17290 / CCUG 55495 / CIP 109462 / JCM 13490 / 255-15).